A 345-amino-acid polypeptide reads, in one-letter code: Viral Fc-gamma receptor-like protein UL119 (345 aa).

Positions 1-23 (MCSVLAIALVVALLGDMHPGVKS) are cleaved as a signal peptide. The tract at residues 23–43 (SSTTSAVTSPSNTTVTSTTSI) is disordered. The Virion surface portion of the chain corresponds to 24–293 (STTSAVTSPS…IKSDPLFEDR (270 aa)). N-linked (GlcNAc...) asparagine; by host glycosylation is found at N34, N48, N95, N104, N148, N179, N198, N217, N225, N241, N244, and N260. One can recognise an Ig-like V-type domain in the interval 91-190 (QVSLNATCKV…TWDLFTYPIY (100 aa)). Residues 294 to 314 (LLAYGVLAFLVFMVIILLYVT) form a helical membrane-spanning segment. Over 315 to 345 (YMLARRRDWSYKRLEEPVEEKKHPVPYFKQW) the chain is Intravirion.

It localises to the virion membrane. In terms of biological role, serves as a receptor for the Fc part of human IgG. May thus be involved in interfering with host Ig-mediated immune responses. This Homo sapiens (Human) protein is Viral Fc-gamma receptor-like protein UL119 (UL119/UL118).